Consider the following 808-residue polypeptide: Sucrose synthase isoform 1 (808 aa).

The tract at residues 277 to 754 (MVFNVVILSP…GLKRIQEKYT (478 aa)) is GT-B glycosyltransferase.

This sequence belongs to the glycosyltransferase 1 family. Plant sucrose synthase subfamily. In terms of assembly, homotetramer. As to expression, expressed in stems, in roots at different developmental stages, and in flower buds, flowers and maturing seeds, with the highest levels in strong utilization sinks for sucrose such as growing stems and tap root tips.

It catalyses the reaction an NDP-alpha-D-glucose + D-fructose = a ribonucleoside 5'-diphosphate + sucrose + H(+). Its activity is regulated as follows. Fructose acts as a non-competitive inhibitor with an inhibition constant of 17.2 mM. In contrast, glucose inhibits uncompetitively with an inhibition constant of 4.3 mM. Sucrose-cleaving enzyme that provides UDP-glucose and fructose for various metabolic pathways. This Daucus carota (Wild carrot) protein is Sucrose synthase isoform 1.